The sequence spans 219 residues: 7-carboxy-7-deazaguanine synthase (219 aa).

Substrate contacts are provided by residues 12-14 and Arg27; that span reads IQG. The Radical SAM core domain occupies 18 to 219; sequence YTGTPSIFIR…VQIHKYLKIR (202 aa). [4Fe-4S] cluster contacts are provided by Cys31, Cys35, and Cys38. Position 40 (Thr40) interacts with Mg(2+). Thr92 lines the substrate pocket. S-adenosyl-L-methionine is bound by residues Gly94 and 136-138; that span reads SPK.

It belongs to the radical SAM superfamily. 7-carboxy-7-deazaguanine synthase family. In terms of assembly, homodimer. The cofactor is [4Fe-4S] cluster. It depends on S-adenosyl-L-methionine as a cofactor. Mg(2+) serves as cofactor.

The catalysed reaction is 6-carboxy-5,6,7,8-tetrahydropterin + H(+) = 7-carboxy-7-deazaguanine + NH4(+). It participates in purine metabolism; 7-cyano-7-deazaguanine biosynthesis. In terms of biological role, catalyzes the complex heterocyclic radical-mediated conversion of 6-carboxy-5,6,7,8-tetrahydropterin (CPH4) to 7-carboxy-7-deazaguanine (CDG), a step common to the biosynthetic pathways of all 7-deazapurine-containing compounds. This Buchnera aphidicola subsp. Schizaphis graminum (strain Sg) protein is 7-carboxy-7-deazaguanine synthase.